The chain runs to 430 residues: Transcription factor PIF4 (430 aa).

5 disordered regions span residues 42–71, 97–136, 160–183, 223–266, and 405–430; these read QTHREQTQTQKQDHHEEALRSSTFLEDQET, MDPLQRPTSETVKPKSSPEPPQVMVKPKACPDPPPQVMPP, TVGPSHCGSNPSQNDLDVSMSHDR, DRKR…NLSE, and SSPAGQQSQQPSSVPTKTTDGSRLDH. Positions 43–60 are enriched in basic and acidic residues; that stretch reads THREQTQTQKQDHHEEAL. The span at 61-71 shows a compositional bias: polar residues; the sequence is RSSTFLEDQET. The span at 126–136 shows a compositional bias: pro residues; the sequence is CPDPPPQVMPP. Positions 160-175 are enriched in polar residues; sequence TVGPSHCGSNPSQNDL. The segment covering 244–253 has biased composition (low complexity); it reads NKSNQRSGSN. Positions 257-266 are enriched in basic and acidic residues; that stretch reads RAAEVHNLSE. Residues 257–306 enclose the bHLH domain; that stretch reads RAAEVHNLSERRRRDRINERMKALQELIPHCSKTDKASILDEAIDYLKSL. Positions 405–419 are enriched in low complexity; the sequence is SSPAGQQSQQPSSVP.

It belongs to the bHLH protein family. As to quaternary structure, interacts preferentially with the Pfr form of phytochrome B (phyB). Binds DNA as a homodimer, but once bound to DNA, loses its capacity to interact with phyB. Interacts with APRR1/TOC1 and PIF3. Binds to RGL2 and RGA. Forms non-functional heterodimer with HFR1. Interacts with PHYB, CRY1 and CRY2 in the nucleus in response to low blue light (LBL). Interacts with FYPP1 and FYPP3. Associates to PTAC12/HMR/PAP5, which acts as a transcriptional coactivator to trigger the thermoresponsive growth-relevant genes and promote warm-temperature-dependent PIF4 accumulation. Interacts with MED14. As to expression, mainly expressed in leaves, stems and seedlings, and, to a lower extent, in fruits, flowers and roots.

It localises to the nucleus. Functionally, transcription factor acting negatively in the phytochrome B signaling pathway. May regulate the expression of a subset of genes involved in cell expansion by binding to the G-box motif. Activated by CRY1 and CRY2 in response to low blue light (LBL) by direct binding at chromatin on E-box variant 5'-CA[CT]GTG-3' to stimulate specific gene expression to adapt global physiology (e.g. hypocotyl elongation in low blue light). Element of a PIF4/HMR/MED14-dependent thermoresponsive process; collaboratively with its transcriptional coactivator PTAC12/HMR/PAP5, involved in the regulation of thermoresponsive growth-relevant genes (e.g. mainly involved in biosynthesis and signaling of the phytohormone auxin) leading to daytime warm temperature elicitation of MED14-dependent thermomorphogenesis (e.g. hypocotyl elongation). The protein is Transcription factor PIF4 of Arabidopsis thaliana (Mouse-ear cress).